The following is a 151-amino-acid chain: Aspartate carbamoyltransferase regulatory chain (151 aa).

Zn(2+) is bound by residues Cys-108, Cys-113, Cys-138, and Cys-141.

The protein belongs to the PyrI family. Contains catalytic and regulatory chains. Zn(2+) is required as a cofactor.

Its function is as follows. Involved in allosteric regulation of aspartate carbamoyltransferase. This chain is Aspartate carbamoyltransferase regulatory chain, found in Pyrobaculum arsenaticum (strain DSM 13514 / JCM 11321 / PZ6).